The primary structure comprises 130 residues: C-X-C motif chemokine 5 (130 aa).

An N-terminal signal peptide occupies residues 1–37 (MSFQLRSSARIPSRSCSSFTLLAFLLLFTLPQHRAQA). 2 cysteine pairs are disulfide-bonded: cysteine 50/cysteine 76 and cysteine 52/cysteine 93.

It belongs to the intercrine alpha (chemokine CxC) family. As to quaternary structure, monomer. Homodimer.

Its subcellular location is the secreted. Its function is as follows. May participate in the recruitment of inflammatory cells by injured or infected tissue. This is C-X-C motif chemokine 5 (Cxcl5) from Rattus norvegicus (Rat).